A 249-amino-acid chain; its full sequence is Phosphate import ATP-binding protein PstB (249 aa).

Positions 5 to 244 constitute an ABC transporter domain; it reads LRIEDLHFWY…PEKDRTEAYV (240 aa). 37–44 provides a ligand contact to ATP; it reads GPSGCGKS.

Belongs to the ABC transporter superfamily. Phosphate importer (TC 3.A.1.7) family. In terms of assembly, the complex is composed of two ATP-binding proteins (PstB), two transmembrane proteins (PstC and PstA) and a solute-binding protein (PstS).

It is found in the cell inner membrane. The catalysed reaction is phosphate(out) + ATP + H2O = ADP + 2 phosphate(in) + H(+). Its function is as follows. Part of the ABC transporter complex PstSACB involved in phosphate import. Responsible for energy coupling to the transport system. The chain is Phosphate import ATP-binding protein PstB from Salinibacter ruber (strain DSM 13855 / M31).